We begin with the raw amino-acid sequence, 229 residues long: Histidine biosynthesis bifunctional protein HisIE (229 aa).

The segment at methionine 1–valine 127 is phosphoribosyl-AMP cyclohydrolase. The phosphoribosyl-ATP pyrophosphohydrolase stretch occupies residues valine 128 to serine 229.

This sequence in the N-terminal section; belongs to the PRA-CH family. It in the C-terminal section; belongs to the PRA-PH family.

It is found in the cytoplasm. It carries out the reaction 1-(5-phospho-beta-D-ribosyl)-ATP + H2O = 1-(5-phospho-beta-D-ribosyl)-5'-AMP + diphosphate + H(+). It catalyses the reaction 1-(5-phospho-beta-D-ribosyl)-5'-AMP + H2O = 1-(5-phospho-beta-D-ribosyl)-5-[(5-phospho-beta-D-ribosylamino)methylideneamino]imidazole-4-carboxamide. Its pathway is amino-acid biosynthesis; L-histidine biosynthesis; L-histidine from 5-phospho-alpha-D-ribose 1-diphosphate: step 2/9. It participates in amino-acid biosynthesis; L-histidine biosynthesis; L-histidine from 5-phospho-alpha-D-ribose 1-diphosphate: step 3/9. The protein is Histidine biosynthesis bifunctional protein HisIE of Wolinella succinogenes (strain ATCC 29543 / DSM 1740 / CCUG 13145 / JCM 31913 / LMG 7466 / NCTC 11488 / FDC 602W) (Vibrio succinogenes).